The chain runs to 133 residues: Nucleoside diphosphate kinase (133 aa).

Lys-9, Phe-57, Arg-85, Thr-91, Arg-102, and Asn-112 together coordinate ATP. Catalysis depends on His-115, which acts as the Pros-phosphohistidine intermediate.

Belongs to the NDK family. Mg(2+) is required as a cofactor.

The protein localises to the cytoplasm. It catalyses the reaction a 2'-deoxyribonucleoside 5'-diphosphate + ATP = a 2'-deoxyribonucleoside 5'-triphosphate + ADP. It carries out the reaction a ribonucleoside 5'-diphosphate + ATP = a ribonucleoside 5'-triphosphate + ADP. Major role in the synthesis of nucleoside triphosphates other than ATP. The ATP gamma phosphate is transferred to the NDP beta phosphate via a ping-pong mechanism, using a phosphorylated active-site intermediate. The protein is Nucleoside diphosphate kinase of Methanococcus maripaludis (strain DSM 14266 / JCM 13030 / NBRC 101832 / S2 / LL).